A 426-amino-acid polypeptide reads, in one-letter code: CinA-like protein (426 aa).

It belongs to the CinA family.

The sequence is that of CinA-like protein from Gloeobacter violaceus (strain ATCC 29082 / PCC 7421).